We begin with the raw amino-acid sequence, 269 residues long: MNSLRVLKIFRSVSRSIRIPASNGCINLGRNAYRVQLAKAPFSFSSIRRSSHTAGNPRSKLINALSSEIDYEKNQVLSEISLPPVNYDIEDVQGSAVVVLKAKHGDENIRITMNVSQDVTDAVPEEQDFTEFEDEQELQNQGESAEDEFPNEDLGRFQPCTIEISKPGNGALVFEATALDDGFDIENIYFSKDIDMLTSDSLEAEWKRRKQYLGPSFKELDPELQDLFHSYLEERKIDESLSSFIVSFGLTKELKEYINWLESVRQFLK.

It belongs to the MAM33 family.

The protein localises to the cytoplasm. Its subcellular location is the mitochondrion matrix. The protein is Mitochondrial acidic protein mam33 of Schizosaccharomyces pombe (strain 972 / ATCC 24843) (Fission yeast).